Reading from the N-terminus, the 338-residue chain is Malate dehydrogenase, mitochondrial (338 aa).

A mitochondrion-targeting transit peptide spans 1-24 (MLSALARPASAALRRSFSTSAQNN). NAD(+) is bound by residues 31–37 (GASGGIG) and Asp-57. The O-linked (GlcNAc) serine glycan is linked to Ser-33. An N6-acetyllysine; alternate mark is found at Lys-78 and Lys-91. N6-succinyllysine; alternate occurs at positions 78 and 91. 2 residues coordinate substrate: Arg-104 and Arg-110. NAD(+) is bound by residues Asn-117 and 140–142 (IAN). Position 142 (Asn-142) interacts with substrate. The residue at position 165 (Lys-165) is an N6-acetyllysine. Arg-176 lines the substrate pocket. Lys-185 carries the post-translational modification N6-acetyllysine; alternate. Lys-185 carries the post-translational modification N6-succinyllysine; alternate. The active-site Proton acceptor is His-200. Lys-203 is subject to N6-succinyllysine. An N6-acetyllysine; alternate mark is found at Lys-215 and Lys-239. 2 positions are modified to N6-succinyllysine; alternate: Lys-215 and Lys-239. Lys-239 is subject to N6-malonyllysine; alternate. Residue Ser-246 is modified to Phosphoserine. Residue Met-251 coordinates NAD(+). Lys-269 is modified (N6-succinyllysine). 4 positions are modified to N6-acetyllysine; alternate: Lys-296, Lys-301, Lys-314, and Lys-324. N6-succinyllysine; alternate occurs at positions 296, 301, 314, and 324. Ser-326 bears the Phosphoserine mark. An N6-acetyllysine; alternate mark is found at Lys-328, Lys-329, and Lys-335. At Lys-328 the chain carries N6-succinyllysine; alternate. Lys-329 carries the post-translational modification N6-malonyllysine; alternate. Lys-335 is subject to N6-succinyllysine; alternate.

The protein belongs to the LDH/MDH superfamily. MDH type 1 family. In terms of assembly, homodimer. Acetylation is enhanced after treatment either with trichostin A (TCA) or with nicotinamide (NAM) with the appearance of tri- and tetraacetylations. Glucose also increases acetylation.

It localises to the mitochondrion matrix. The catalysed reaction is (S)-malate + NAD(+) = oxaloacetate + NADH + H(+). Enzyme activity is enhanced by acetylation. The chain is Malate dehydrogenase, mitochondrial (MDH2) from Macaca fascicularis (Crab-eating macaque).